The primary structure comprises 322 residues: Pyridoxal kinase (322 aa).

At Met-1 the chain carries N-acetylmethionine. Pyridoxal is bound by residues Ser-22 and Thr-57. Residue Thr-57 coordinates pyridoxal 5'-phosphate. Ser-69 bears the Phosphoserine mark. Asp-123 contacts ATP. Asp-123 is a binding site for Na(+). Mg(2+) is bound at residue Asp-128. Residue Thr-158 coordinates Na(+). 160–163 contacts ATP; that stretch reads NQFE. Ser-174 bears the Phosphoserine mark. Residue Thr-196 coordinates Na(+). 196-197 serves as a coordination point for ATP; sequence TS. Ser-223 is modified (phosphoserine). ATP-binding positions include 236–238 and Thr-243; that span reads VDA. A pyridoxal 5'-phosphate-binding site is contributed by 244 to 245; sequence GD. The active-site Proton acceptor is the Asp-245. At Ser-295 the chain carries Phosphoserine.

Belongs to the pyridoxine kinase family. Homodimer. It depends on Zn(2+) as a cofactor. Requires Mg(2+) as cofactor. The N-terminus is blocked.

It localises to the cytoplasm. Its subcellular location is the cytosol. It catalyses the reaction pyridoxal + ATP = pyridoxal 5'-phosphate + ADP + H(+). The enzyme catalyses pyridoxamine + ATP = pyridoxamine 5'-phosphate + ADP + H(+). It carries out the reaction pyridoxine + ATP = pyridoxine 5'-phosphate + ADP + H(+). It functions in the pathway cofactor metabolism; pyridoxal 5'-phosphate salvage; pyridoxal 5'-phosphate from pyridoxal: step 1/1. The protein operates within cofactor metabolism; pyridoxal 5'-phosphate salvage; pyridoxine 5'-phosphate from pyridoxine: step 1/1. It participates in cofactor metabolism; pyridoxal 5'-phosphate salvage; pyridoxamine 5'-phosphate from pyridoxamine: step 1/1. With respect to regulation, activity is increased in the presence of K(+)or Na(+). Catalyzes the phosphorylation of the dietary vitamin B6 vitamers pyridoxal (PL), pyridoxine (PN) and pyridoxamine (PM) to form pyridoxal 5'-phosphate (PLP), pyridoxine 5'-phosphate (PNP) and pyridoxamine 5'-phosphate (PMP), respectively. PLP is the active form of vitamin B6, and acts as a cofactor for over 140 different enzymatic reactions. The sequence is that of Pyridoxal kinase (PDXK) from Sus scrofa (Pig).